The sequence spans 1267 residues: MINYLKFNRFCFSKKKFFHKCNLPYLLHNQIGSYNSFLSSKYNSLFSIKKVLKQYFPLICNNKNIFIKLKKIELLEPCNTEKYTKIRNLHLFSTLYMYISIYVINKNLNVYKKIFLGNIPSMTKKGNFIINGIDRILISQFTKSYGIYFYTEKKKKKCIIIPLKGSWLEFIITNNFLIVFDKKINFEINVFLICLGYNKKYFFNFFFFKIKIKIIRGKKRIFFLLNKKKYFYKIYNKYICISIKKILGKLFGKNYFLKKNTFLKFNIIDINKVNLILNYPIYFFFIIFLKKIINLNYLIYIYKNFKLKINKELLQYKKGYIINFFRNLFYKKKYFYSLIGAKRIFKRLFLKKNNKLTIYLEIIKKILKFIKFNIQNDNFDNLENKLILNCGKLLSIKFDFLFKKVIKFINYKMNNFKKYKDLDFIVNSDIITIGLKDYFCNNELSQFLDQNNPLAEISHNRKISLISGIGIEKENCGFDIRDIHYSHYCKVCPIDTPEGHNIGLINSLAYLSKVNKYNFISTIYKISILGKILGITFLDNKFDKHKFIVNFNSTIETIYGEIFRSPYFEARKTNYYYYKKFLNIDLIEICGDQIISVGASLIPFLSHNDANRCLMGSNMQRQAVPLIDSENPIVGTGNELEIGLNSNYNILSDLNGYVLYSDNYKIIIKNNNFIKTYFLEKYTRTNQNTILNQYTKVLKGDFVKVGNIIADSNSTKNGEISLGKNLRVAFMSWYGYNFEDSILLSSSILNKNNFNSIHIYEFITVLKYNENGFEIVSNECFGSNEKIKNKVKNGIIKIGEFVFSKDVIVGKMIPKKKRKFSPEEKLFKIVFSESNFNYYEQPLTVPKNIKGTIIAVNDFKIFYFKNKIFKLLKFEQLNYTCKNINNFFYETFNYYLTKIKKLLFNNKITIKKKRINSYNININNIFKIKCFNKKINFKLNIFKNIISNELLKKKNIFVYKKINFIKHDDFENSIIRIIKIKIAVKKQIAIGDKMSGRHGNKGVVSNIIDYENMPYDKFGNKIDLILNPLGVPSRMNVGQLLEVFLAGSLNLIKSFFLKIKNLNKISYFKMKLFIKIIFKCIYDKNINLNIFNNSLVLKIFKNIKNQLNVCVHNFYNFNVNKVNNIIKTIGINKNCELLLFDGITGKRYLQLVNVGYIYFMKLNHLVIDKIYSRSIGPYSIVTQQPLGGKSNLGGQRLGEMEVWALEAYGAAFLLKEMLTIKSDDILGRIELYKNIIKGINDANSGIPESFQVLMKEIQSLCFDIKIL.

This sequence belongs to the RNA polymerase beta chain family. As to quaternary structure, the RNAP catalytic core consists of 2 alpha, 1 beta, 1 beta' and 1 omega subunit. When a sigma factor is associated with the core the holoenzyme is formed, which can initiate transcription.

The catalysed reaction is RNA(n) + a ribonucleoside 5'-triphosphate = RNA(n+1) + diphosphate. DNA-dependent RNA polymerase catalyzes the transcription of DNA into RNA using the four ribonucleoside triphosphates as substrates. The polypeptide is DNA-directed RNA polymerase subunit beta (rpoB) (Carsonella ruddii (strain PV)).